We begin with the raw amino-acid sequence, 355 residues long: Blue-sensitive opsin (355 aa).

Residues 1 to 41 are Extracellular-facing; it reads MKSRPQEFQEDFYIPIPLDTNNITALSPFLVPQDHLGGSGI. Residue Asn-22 is glycosylated (N-linked (GlcNAc...) asparagine). The chain crosses the membrane as a helical span at residues 42-66; that stretch reads FMIMTVFMLFLFIGGTSINVLTIVC. Topologically, residues 67–78 are cytoplasmic; it reads TVQYKKLRSHLN. The helical transmembrane segment at 79–104 threads the bilayer; the sequence is YILVNLAISNLLVSTVGSFTAFVSFL. The Extracellular segment spans residues 105–118; that stretch reads NRYFIFGPTACKIE. A disulfide bond links Cys-115 and Cys-192. The helical transmembrane segment at 119–138 threads the bilayer; that stretch reads GFVATLGGMVSLWSLSVVAF. The Cytoplasmic segment spans residues 139-157; sequence ERWLVICKPVGNFSFKGTH. A helical membrane pass occupies residues 158-181; the sequence is AIIGCALTWFFALLASTPPLFGWS. At 182–207 the chain is on the extracellular side; sequence RYIPEGLQCSCGPDWYTTENKYNNES. N-linked (GlcNAc...) asparagine glycosylation is present at Asn-205. A helical membrane pass occupies residues 208–235; the sequence is YVMFLFCFCFGFPFTVILFCYGQLLFTL. The Cytoplasmic portion of the chain corresponds to 236–257; sequence KSAAKAQADSASTQKAEREVTK. A helical membrane pass occupies residues 258–281; it reads MVVVMVMGFLVCWLPYASFALWVV. The Extracellular segment spans residues 282 to 289; that stretch reads FNRGQSFD. A helical transmembrane segment spans residues 290-314; that stretch reads LRLGTIPSCFSKASTVYNPVIYVFM. Lys-301 bears the N6-(retinylidene)lysine mark. Residues 315–355 lie on the Cytoplasmic side of the membrane; it reads NKQFRSCMMKLIFCGKSPFGDDEEASSSSQVTQVSSVGPEK. The interval 334–355 is disordered; sequence GDDEEASSSSQVTQVSSVGPEK. Over residues 340–355 the composition is skewed to low complexity; sequence SSSSQVTQVSSVGPEK.

This sequence belongs to the G-protein coupled receptor 1 family. Opsin subfamily. In terms of processing, phosphorylated on some or all of the serine and threonine residues present in the C-terminal region. In terms of tissue distribution, the color pigments are found in the cone photoreceptor cells.

The protein localises to the membrane. In terms of biological role, visual pigments are the light-absorbing molecules that mediate vision. They consist of an apoprotein, opsin, covalently linked to cis-retinal. This Psalidodon fasciatus (Banded astyanax) protein is Blue-sensitive opsin (B23).